The primary structure comprises 263 residues: Lysine 5,6-aminomutase beta subunit (263 aa).

Positions 120 to 259 (EVVMVGASTG…TFILKEMVQR (140 aa)) constitute a B12-binding domain. Adenosylcob(III)alamin contacts are provided by residues 130–136 (TDAHTVG) and histidine 133. Lysine 144 is modified (N6-(pyridoxal phosphate)lysine). Adenosylcob(III)alamin-binding positions include 185-192 (LVSQTVTQ), 219-223 (IAGGA), and 239-244 (FGPGKY).

Belongs to the KamE family. As to quaternary structure, heterotetramer of 2 alpha and 2 beta subunits. Adenosylcob(III)alamin is required as a cofactor. Pyridoxal 5'-phosphate serves as cofactor.

It carries out the reaction (3S)-3,6-diaminohexanoate = (3S,5S)-3,5-diaminohexanoate. The catalysed reaction is D-lysine = (2R,5S)-2,5-diaminohexanoate. It functions in the pathway amino-acid degradation; L-lysine degradation via acetate pathway. Functionally, catalyzes the migration of the L-beta-lysine and D-lysine epsilon amino group to the delta carbon to produce 3,5-diaminohexanoate and 2,5-diaminohexanoate, respectively. The chain is Lysine 5,6-aminomutase beta subunit from Fusobacterium nucleatum subsp. nucleatum (strain ATCC 25586 / DSM 15643 / BCRC 10681 / CIP 101130 / JCM 8532 / KCTC 2640 / LMG 13131 / VPI 4355).